Here is a 515-residue protein sequence, read N- to C-terminus: Glucose-6-phosphate 1-dehydrogenase (515 aa).

Ala2 carries the post-translational modification N-acetylalanine. Residue Ser8 is modified to Phosphoserine. Position 10 is a phosphothreonine (Thr10). 38–45 is a binding site for NADP(+); sequence GASGDLAK. The residue at position 89 (Lys89) is an N6-acetyllysine. NADP(+) contacts are provided by Tyr147 and Lys171. Residues Lys171, 201–205, Glu239, and Glu258 contribute to the D-glucose 6-phosphate site; that span reads HYLGK. Lys171 is modified (N6-(2-hydroxyisobutyryl)lysine; alternate). The residue at position 171 (Lys171) is an N6-acetyllysine; alternate. NADP(+) is bound at residue Arg357. 2 residues coordinate D-glucose 6-phosphate: Lys360 and Arg365. The NADP(+) site is built by Lys366, Arg370, and Arg393. Residue Gln395 participates in D-glucose 6-phosphate binding. NADP(+)-binding positions include 401–403 and 421–423; these read YTK and DLT. Lys403 is modified (N6-acetyllysine). Lys432 bears the N6-acetyllysine mark. Residue Arg487 coordinates NADP(+). Lys497 is modified (N6-acetyllysine). Positions 503 and 509 each coordinate NADP(+). Tyr503 is subject to Phosphotyrosine.

The protein belongs to the glucose-6-phosphate dehydrogenase family. As to quaternary structure, homotetramer; dimer of dimers. Interacts with SIRT2; the interaction is enhanced by H(2)O(2) treatment. Forms a ternary complex with ALDOB and TP53; this interaction is direct. ALDOB stabilizes the complex inhibiting G6PD activity and keeping oxidative pentose phosphate metabolism in check. Post-translationally, acetylated by ELP3 at Lys-403; acetylation inhibits its homodimerization and enzyme activity. Deacetylated by SIRT2 at Lys-403; deacetylation stimulates its enzyme activity.

Its subcellular location is the cytoplasm. It localises to the cytosol. It is found in the membrane. The enzyme catalyses D-glucose 6-phosphate + NADP(+) = 6-phospho-D-glucono-1,5-lactone + NADPH + H(+). The protein operates within carbohydrate degradation; pentose phosphate pathway; D-ribulose 5-phosphate from D-glucose 6-phosphate (oxidative stage): step 1/3. Its function is as follows. Cytosolic glucose-6-phosphate dehydrogenase that catalyzes the first and rate-limiting step of the oxidative branch within the pentose phosphate pathway/shunt, an alternative route to glycolysis for the dissimilation of carbohydrates and a major source of reducing power and metabolic intermediates for fatty acid and nucleic acid biosynthetic processes. This is Glucose-6-phosphate 1-dehydrogenase (G6PD) from Bos indicus (Zebu).